Reading from the N-terminus, the 594-residue chain is Lysine--tRNA ligase cla4 (594 aa).

Residues Met1–Ala62 are disordered. The span at Thr18–Lys42 shows a compositional bias: basic and acidic residues.

Belongs to the class-II aminoacyl-tRNA synthetase family. As to quaternary structure, homodimer.

The catalysed reaction is tRNA(Lys) + L-lysine + ATP = L-lysyl-tRNA(Lys) + AMP + diphosphate. Involved in self-resistance to cladosporin since this product is an inhibitor of lysyl-tRNA synthetase. Cla4 may not be inhibited by cladosporin, thereby imparting cladosporin resistance. When cladosporin biosynthesis is switched on, transcription of cla4 will then be necessary for continued protein synthesis in C.cladosporioides. The sequence is that of Lysine--tRNA ligase cla4 from Cladosporium cladosporioides.